Reading from the N-terminus, the 962-residue chain is Synphilin-1 (962 aa).

3 disordered regions span residues 80–99 (SPLKHQPETLENNENEDQKN), 104–137 (YQKGGETDQGPQPEELSPEDGVGGLPGKGSEPSQ), and 222–249 (TALRDQHKLSTEDSESSPALGKCGPAYE). 4 ANK repeats span residues 348 to 379 (NGNNLLHIAASKGHAECLQHLTSLMGEDCLNE), 383 to 412 (EQLTPAGLAIKNGQLECVRWMVSETEAIAE), 418 to 447 (DFPSLIHYAGCYGQEKILLWLLQFMQEQGI), and 455 to 484 (EGNSAVHVASQHGYLGCIQTLVEYGANVTM). Positions 522–548 (VKLTKQLKEQTVERVTLQSQLQQLLEA) form a coiled coil. The interval 548-590 (AQKSEGKSLPSSPSSPSSPASTKSQWKALDTDEESTGKSKVGA) is disordered. Low complexity predominate over residues 554 to 571 (KSLPSSPSSPSSPASTKS). An ANK 5 repeat occupies 602–631 (VSSRARTKGKDEDSDKILRQLLGKEISENV). Low complexity predominate over residues 667-684 (RQLMQRSLSESDTDSNNS). The tract at residues 667–852 (RQLMQRSLSE…QRTSESGEQM (186 aa)) is disordered. Positions 685 to 699 (EDPKNTPVKRADRPR) are enriched in basic and acidic residues. One copy of the ANK 6 repeat lies at 698–728 (PRPQPIVESVENVDSAESLHLMIKKHSLASG). A compositionally biased stretch (polar residues) spans 772–790 (PSTEATQSSPDSTAAQKVA). Over residues 831–840 (NGEKDKDKGR) the composition is skewed to basic and acidic residues.

Associates with SNCA, RNF19A and PRKN. Post-translationally, ubiquitinated; mediated by SIAH1 or RNF19A and leading to its subsequent proteasomal degradation.

In Mus musculus (Mouse), this protein is Synphilin-1 (Sncaip).